The primary structure comprises 319 residues: Epoxyqueuosine reductase (319 aa).

Asp128 functions as the Proton donor in the catalytic mechanism. The 4Fe-4S ferredoxin-type domain occupies 173–202 (EANDPHPNYCGTCTRCLSACPTAALVEPAV). Residues Cys182, Cys185, Cys188, Cys192, Cys208, Cys236, Cys239, and Cys243 each contribute to the [4Fe-4S] cluster site.

This sequence belongs to the QueG family. Monomer. It depends on cob(II)alamin as a cofactor. [4Fe-4S] cluster is required as a cofactor.

It localises to the cytoplasm. The catalysed reaction is epoxyqueuosine(34) in tRNA + AH2 = queuosine(34) in tRNA + A + H2O. It participates in tRNA modification; tRNA-queuosine biosynthesis. Its function is as follows. Catalyzes the conversion of epoxyqueuosine (oQ) to queuosine (Q), which is a hypermodified base found in the wobble positions of tRNA(Asp), tRNA(Asn), tRNA(His) and tRNA(Tyr). The sequence is that of Epoxyqueuosine reductase from Gloeobacter violaceus (strain ATCC 29082 / PCC 7421).